Reading from the N-terminus, the 435-residue chain is ATP-dependent RNA helicase RhlB (435 aa).

The Q motif motif lies at 9-37 (QKFADLGLNPQVVEGLEKKGFEFCTPIQA). The Helicase ATP-binding domain maps to 40–219 (LPVLLSGQDI…FEHMHNPEHV (180 aa)). An ATP-binding site is contributed by 53-60 (AQTGTGKT). The short motif at 165–168 (DEAD) is the DEAD box element. Residues 245 to 390 (ALLQTLIEEE…VSDYDSSALI (146 aa)) enclose the Helicase C-terminal domain. The segment at 395–435 (APVRTPSARNQQRRTNTGGARSGDRKSNNRRPRQPRQHKEA) is disordered. Residues 401–413 (SARNQQRRTNTGG) show a composition bias toward polar residues. The segment covering 422 to 435 (NNRRPRQPRQHKEA) has biased composition (basic residues).

The protein belongs to the DEAD box helicase family. RhlB subfamily. Component of the RNA degradosome, which is a multiprotein complex involved in RNA processing and mRNA degradation.

The protein localises to the cytoplasm. The enzyme catalyses ATP + H2O = ADP + phosphate + H(+). Its function is as follows. DEAD-box RNA helicase involved in RNA degradation. Has RNA-dependent ATPase activity and unwinds double-stranded RNA. This is ATP-dependent RNA helicase RhlB from Vibrio vulnificus (strain YJ016).